Reading from the N-terminus, the 382-residue chain is Chaperone protein DnaJ (382 aa).

In terms of domain architecture, J spans 5-69 (DLYGVLGVAK…QKRANYDQSG (65 aa)). Positions 104–123 (QFFGGGGGQRNPNAPRPGRD) are disordered. Residues 138–220 (GKKTKIKYNR…CGGSGHEEER (83 aa)) form a CR-type zinc finger. Positions 151, 154, 168, 171, 194, 197, 208, and 211 each coordinate Zn(2+). 4 CXXCXGXG motif repeats span residues 151–158 (CHTCGGNG), 168–175 (CHQCGGSG), 194–201 (CPVCHGTG), and 208–215 (CPTCGGSG). Residues 358-382 (ASGESVTGSGKGNLFNKMRDKFNEN) form a disordered region.

This sequence belongs to the DnaJ family. Homodimer. Zn(2+) is required as a cofactor.

The protein resides in the cytoplasm. Participates actively in the response to hyperosmotic and heat shock by preventing the aggregation of stress-denatured proteins and by disaggregating proteins, also in an autonomous, DnaK-independent fashion. Unfolded proteins bind initially to DnaJ; upon interaction with the DnaJ-bound protein, DnaK hydrolyzes its bound ATP, resulting in the formation of a stable complex. GrpE releases ADP from DnaK; ATP binding to DnaK triggers the release of the substrate protein, thus completing the reaction cycle. Several rounds of ATP-dependent interactions between DnaJ, DnaK and GrpE are required for fully efficient folding. Also involved, together with DnaK and GrpE, in the DNA replication of plasmids through activation of initiation proteins. This is Chaperone protein DnaJ from Levilactobacillus brevis (strain ATCC 367 / BCRC 12310 / CIP 105137 / JCM 1170 / LMG 11437 / NCIMB 947 / NCTC 947) (Lactobacillus brevis).